A 77-amino-acid polypeptide reads, in one-letter code: MSIEERVKKIIVDQLGVKAEDVKPEASFIEDLGADSLDTVELVMALEEEFDIEIPDEEAEKITTVQSAIDYVTKANA.

A Carrier domain is found at 1–76 (MSIEERVKKI…SAIDYVTKAN (76 aa)). Serine 36 bears the O-(pantetheine 4'-phosphoryl)serine mark.

The protein belongs to the acyl carrier protein (ACP) family. In terms of processing, 4'-phosphopantetheine is transferred from CoA to a specific serine of apo-ACP by AcpS. This modification is essential for activity because fatty acids are bound in thioester linkage to the sulfhydryl of the prosthetic group.

Its subcellular location is the cytoplasm. Its pathway is lipid metabolism; fatty acid biosynthesis. Carrier of the growing fatty acid chain in fatty acid biosynthesis. The polypeptide is Acyl carrier protein (Actinobacillus pleuropneumoniae serotype 5b (strain L20)).